Consider the following 348-residue polypeptide: Nuclear receptor subfamily 1 group I member 3 (348 aa).

The nuclear receptor DNA-binding region spans 8-83; it reads LRNCVVCGDQ…AGMRKDMILS (76 aa). An NR C4-type zinc finger spans residues 11-31; that stretch reads CVVCGDQATGYHFNALTCEGC. At T38 the chain carries Phosphothreonine; by PKC. An NR C4-type zinc finger spans residues 47–71; it reads CPFAGSCEVSKTQRRHCPACRLQKC. The NR LBD domain occupies 109 to 348; that stretch reads EQEELIRTLL…MMPLLQEICS (240 aa).

It belongs to the nuclear hormone receptor family. NR1 subfamily. As to quaternary structure, heterodimer of NR1I3 and RXR. Interacts with PSMC4. Interacts with ECT2. Directly interacts with DNAJC7; this complex may also include HSP90. Interacts with CRY1. Interacts with CRY2 in a ligand-dependent manner. Post-translationally, phosphorylated at Thr-38 by PKC, dephosphorylation of Thr-38 is required for nuclear translocation and activation.

Its subcellular location is the nucleus. It is found in the cytoplasm. The protein resides in the cytoskeleton. Its function is as follows. Binds and transactivates the retinoic acid response elements that control expression of the retinoic acid receptor beta 2 and alcohol dehydrogenase 3 genes. Transactivates both the phenobarbital responsive element module of the human CYP2B6 gene and the CYP3A4 xenobiotic response element. This chain is Nuclear receptor subfamily 1 group I member 3 (NR1I3), found in Pan troglodytes (Chimpanzee).